The following is a 374-amino-acid chain: Speckle-type POZ protein B (374 aa).

An MATH domain is found at 31–161 (KFSYMWTINN…DDKLTLFCEV (131 aa)). The segment at 71 to 191 (VNPKGLDEES…PECRLSDELG (121 aa)) is required for nuclear localization. The BTB domain occupies 173 to 297 (QNTMNMVKVP…MCEEALCSNL (125 aa)). Positions 297 to 355 (LSVENAAEILILADLHSADQLKTQAVDFINYHASDVMETSGWKSMVVSHPHLVAEAYRS) are homodimerization.

This sequence belongs to the Tdpoz family. In terms of assembly, homodimer. Part of cullin-RING-based BCR (BTB-CUL3-RBX1) E3 ubiquitin-protein ligase complexes that contain CUL3 and SPOP, plus a target protein.

Its subcellular location is the nucleus. The protein localises to the nucleus speckle. It participates in protein modification; protein ubiquitination. Component of a cullin-RING-based BCR (BTB-CUL3-RBX1) E3 ubiquitin-protein ligase complex that mediates the ubiquitination of target proteins, leading most often to their proteasomal degradation. The chain is Speckle-type POZ protein B (spop-b) from Xenopus laevis (African clawed frog).